Reading from the N-terminus, the 665-residue chain is F-box/WD repeat-containing protein lin-23 (665 aa).

Positions 81-127 (RDFISNLPAHLVELILFNVNSDSLKSCEEVSTSWRCALARGQHWKKL) constitute an F-box domain. WD repeat units lie at residues 220–257 (ENSK…CSRI), 260–299 (GHTG…KTLI), 301–337 (HCEA…DITI), 343–380 (GHRA…FVRT), 383–420 (GHRR…CLRV), 423–460 (GHEE…DPRA), and 472–509 (QHTG…PSGL). A disordered region spans residues 574–665 (AAAEAARGAG…VDEEMPDGGP (92 aa)). Acidic residues-rich tracts occupy residues 584–595 (DNDESSSEEDLD) and 655–665 (DVDEEMPDGGP).

Part of a SCF (SKP1-cullin-F-box) protein ligase complex.

The protein localises to the cytoplasm. Functions cell autonomously to negatively regulate cell cycle progression. Required to restrain cell proliferation in response to developmental cues. Probably recognizes and binds to some proteins and promotes their ubiquitination and degradation. The sequence is that of F-box/WD repeat-containing protein lin-23 (lin-23) from Caenorhabditis elegans.